The sequence spans 412 residues: Peptidase T (412 aa).

H81 contributes to the Zn(2+) binding site. Residue D83 is part of the active site. D144 provides a ligand contact to Zn(2+). E178 (proton acceptor) is an active-site residue. Zn(2+) is bound by residues E179, D201, and H383.

It belongs to the peptidase M20B family. The cofactor is Zn(2+).

Its subcellular location is the cytoplasm. The catalysed reaction is Release of the N-terminal residue from a tripeptide.. In terms of biological role, cleaves the N-terminal amino acid of tripeptides. The chain is Peptidase T from Bacillus cereus (strain ZK / E33L).